The following is a 402-amino-acid chain: Glutamate N-acetyltransferase (402 aa).

Substrate is bound by residues Thr146, Lys172, Thr185, Glu267, Asn397, and Thr402. Residue Thr185 is the Nucleophile of the active site.

It belongs to the ArgJ family. In terms of assembly, heterotetramer of two alpha and two beta chains.

The protein resides in the cytoplasm. It carries out the reaction N(2)-acetyl-L-ornithine + L-glutamate = N-acetyl-L-glutamate + L-ornithine. The protein operates within amino-acid biosynthesis; L-arginine biosynthesis; L-ornithine and N-acetyl-L-glutamate from L-glutamate and N(2)-acetyl-L-ornithine (cyclic): step 1/1. Its activity is regulated as follows. Competitively inhibited by L-ornithine. Catalyzes the transfer of the acetyl group from N(2)-acetylornithine to glutamate, forming N-acetylglutamate and L-ornithine. The polypeptide is Glutamate N-acetyltransferase (Methanocaldococcus jannaschii (strain ATCC 43067 / DSM 2661 / JAL-1 / JCM 10045 / NBRC 100440) (Methanococcus jannaschii)).